The primary structure comprises 213 residues: Na(+)-translocating NADH-quinone reductase subunit D (213 aa).

7 consecutive transmembrane segments (helical) span residues 21-41, 42-62, 77-97, 101-121, 131-151, 153-173, and 183-203; these read ILIA…VQTA, ITMG…VSLL, IIIS…FFDI, LSVF…SESL, FLDG…IGVI, ELFG…VYAS, and LSLM…IWLV.

It belongs to the NqrDE/RnfAE family. Composed of six subunits; NqrA, NqrB, NqrC, NqrD, NqrE and NqrF.

It localises to the cell inner membrane. It catalyses the reaction a ubiquinone + n Na(+)(in) + NADH + H(+) = a ubiquinol + n Na(+)(out) + NAD(+). In terms of biological role, NQR complex catalyzes the reduction of ubiquinone-1 to ubiquinol by two successive reactions, coupled with the transport of Na(+) ions from the cytoplasm to the periplasm. NqrA to NqrE are probably involved in the second step, the conversion of ubisemiquinone to ubiquinol. This chain is Na(+)-translocating NADH-quinone reductase subunit D, found in Chlamydia pneumoniae (Chlamydophila pneumoniae).